Reading from the N-terminus, the 394-residue chain is Phosphopentomutase (394 aa).

Mn(2+) contacts are provided by Asp-15, Asp-288, His-293, Asp-329, His-330, and His-341.

This sequence belongs to the phosphopentomutase family. Mn(2+) is required as a cofactor.

The protein localises to the cytoplasm. It carries out the reaction 2-deoxy-alpha-D-ribose 1-phosphate = 2-deoxy-D-ribose 5-phosphate. It catalyses the reaction alpha-D-ribose 1-phosphate = D-ribose 5-phosphate. The protein operates within carbohydrate degradation; 2-deoxy-D-ribose 1-phosphate degradation; D-glyceraldehyde 3-phosphate and acetaldehyde from 2-deoxy-alpha-D-ribose 1-phosphate: step 1/2. Isomerase that catalyzes the conversion of deoxy-ribose 1-phosphate (dRib-1-P) and ribose 1-phosphate (Rib-1-P) to deoxy-ribose 5-phosphate (dRib-5-P) and ribose 5-phosphate (Rib-5-P), respectively. This Bacillus pumilus (strain SAFR-032) protein is Phosphopentomutase.